The chain runs to 276 residues: Lipoyl synthase (276 aa).

Residues C27, C32, C38, C53, C57, C60, and S266 each contribute to the [4Fe-4S] cluster site. The Radical SAM core domain maps to 39–255 (FGNKTATFMI…EEIGYEMGFK (217 aa)).

The protein belongs to the radical SAM superfamily. Lipoyl synthase family. The cofactor is [4Fe-4S] cluster.

It is found in the cytoplasm. It catalyses the reaction [[Fe-S] cluster scaffold protein carrying a second [4Fe-4S](2+) cluster] + N(6)-octanoyl-L-lysyl-[protein] + 2 oxidized [2Fe-2S]-[ferredoxin] + 2 S-adenosyl-L-methionine + 4 H(+) = [[Fe-S] cluster scaffold protein] + N(6)-[(R)-dihydrolipoyl]-L-lysyl-[protein] + 4 Fe(3+) + 2 hydrogen sulfide + 2 5'-deoxyadenosine + 2 L-methionine + 2 reduced [2Fe-2S]-[ferredoxin]. It functions in the pathway protein modification; protein lipoylation via endogenous pathway; protein N(6)-(lipoyl)lysine from octanoyl-[acyl-carrier-protein]: step 2/2. In terms of biological role, catalyzes the radical-mediated insertion of two sulfur atoms into the C-6 and C-8 positions of the octanoyl moiety bound to the lipoyl domains of lipoate-dependent enzymes, thereby converting the octanoylated domains into lipoylated derivatives. The polypeptide is Lipoyl synthase (Aquifex aeolicus (strain VF5)).